Consider the following 539-residue polypeptide: Chaperonin GroEL (539 aa).

Residues 29–32, 86–90, glycine 413, and aspartate 492 each bind ATP; these read TLGP and DGTTT.

This sequence belongs to the chaperonin (HSP60) family. In terms of assembly, forms a cylinder of 14 subunits composed of two heptameric rings stacked back-to-back. Interacts with the co-chaperonin GroES.

It is found in the cytoplasm. The catalysed reaction is ATP + H2O + a folded polypeptide = ADP + phosphate + an unfolded polypeptide.. Together with its co-chaperonin GroES, plays an essential role in assisting protein folding. The GroEL-GroES system forms a nano-cage that allows encapsulation of the non-native substrate proteins and provides a physical environment optimized to promote and accelerate protein folding. The sequence is that of Chaperonin GroEL from Fusobacterium nucleatum subsp. polymorphum (Fusobacterium polymorphum).